A 282-amino-acid chain; its full sequence is Peptidoglycan-recognition protein LD (282 aa).

The tract at residues 1 to 29 (MDSSHIAVRVARRSPSPAAVSQSSYGSLG) is disordered. Residues 1–88 (MDSSHIAVRV…RRNPTLHEDC (88 aa)) lie on the Cytoplasmic side of the membrane. The helical transmembrane segment at 89–111 (FNWRSVGLLVMCASALALAAYLL) threads the bilayer. Residues 112–282 (WRQTQTPDFG…PHYASHQTSK (171 aa)) are Extracellular-facing. Cysteine 162 and cysteine 166 are oxidised to a cystine. N-linked (GlcNAc...) asparagine glycosylation occurs at asparagine 222.

It belongs to the N-acetylmuramoyl-L-alanine amidase 2 family. As to expression, expressed in uninduced hemocytes and mbn-2 cells.

It localises to the cell membrane. Its function is as follows. Peptidoglycan-recognition protein probably involved in innate immunity by binding to peptidoglycans (PGN) of bacteria and activating the immune response. This is Peptidoglycan-recognition protein LD (PGRP-LD) from Drosophila melanogaster (Fruit fly).